The following is a 239-amino-acid chain: Ribonuclease PH (239 aa).

Phosphate contacts are provided by residues Arg86 and 124–126 (GTR).

The protein belongs to the RNase PH family. As to quaternary structure, homohexameric ring arranged as a trimer of dimers.

It catalyses the reaction tRNA(n+1) + phosphate = tRNA(n) + a ribonucleoside 5'-diphosphate. Phosphorolytic 3'-5' exoribonuclease that plays an important role in tRNA 3'-end maturation. Removes nucleotide residues following the 3'-CCA terminus of tRNAs; can also add nucleotides to the ends of RNA molecules by using nucleoside diphosphates as substrates, but this may not be physiologically important. Probably plays a role in initiation of 16S rRNA degradation (leading to ribosome degradation) during starvation. The protein is Ribonuclease PH of Rickettsia bellii (strain RML369-C).